Reading from the N-terminus, the 298-residue chain is 4-nitrophenylphosphatase (298 aa).

Homodimer. The N-terminus is blocked.

The enzyme catalyses 4-nitrophenyl phosphate + H2O = 4-nitrophenol + phosphate + H(+). Its activity is regulated as follows. Activity enhanced by Mg(2+) ion but inhibited by Zn(2+) ion. This Schizosaccharomyces pombe (strain 972 / ATCC 24843) (Fission yeast) protein is 4-nitrophenylphosphatase (pho2).